Here is a 175-residue protein sequence, read N- to C-terminus: Inorganic pyrophosphatase (175 aa).

Positions 30, 44, and 56 each coordinate substrate. The Mg(2+) site is built by Asp-66, Asp-71, and Asp-103. Tyr-142 provides a ligand contact to substrate.

It belongs to the PPase family. Homohexamer. Requires Mg(2+) as cofactor.

It is found in the cytoplasm. The catalysed reaction is diphosphate + H2O = 2 phosphate + H(+). Its function is as follows. Catalyzes the hydrolysis of inorganic pyrophosphate (PPi) forming two phosphate ions. The chain is Inorganic pyrophosphatase from Buchnera aphidicola subsp. Baizongia pistaciae (strain Bp).